Here is a 213-residue protein sequence, read N- to C-terminus: MSDATSMKHPSGLTSGDFTAAEEPFALFAEWFAEAVASEPNDPNAMALATVDADGLPDVRMVLMKDYDATGFVFYSHLASQKGQELAANPKAALLFHWKSLRRQVRVRGLVAPVTDAEADAYFATRPKQAQIGAWASKQSQPLESRFAFEQAIAKVAAKHLLGEVPRPPGWSGWRVTPSHIEFWHDRPFRLHDRIEFRRDDPAHPWSKTRLYP.

FMN is bound by residues 60–65 (RMVLMK), 75–76 (YS), K82, and Q104. K65 contributes to the substrate binding site. Substrate-binding residues include Y122 and R126. FMN contacts are provided by residues 139–140 (QS) and W184. A substrate-binding site is contributed by 190–192 (RLH). Position 194 (R194) interacts with FMN.

The protein belongs to the pyridoxamine 5'-phosphate oxidase family. In terms of assembly, homodimer. It depends on FMN as a cofactor.

The catalysed reaction is pyridoxamine 5'-phosphate + O2 + H2O = pyridoxal 5'-phosphate + H2O2 + NH4(+). The enzyme catalyses pyridoxine 5'-phosphate + O2 = pyridoxal 5'-phosphate + H2O2. The protein operates within cofactor metabolism; pyridoxal 5'-phosphate salvage; pyridoxal 5'-phosphate from pyridoxamine 5'-phosphate: step 1/1. It participates in cofactor metabolism; pyridoxal 5'-phosphate salvage; pyridoxal 5'-phosphate from pyridoxine 5'-phosphate: step 1/1. In terms of biological role, catalyzes the oxidation of either pyridoxine 5'-phosphate (PNP) or pyridoxamine 5'-phosphate (PMP) into pyridoxal 5'-phosphate (PLP). The chain is Pyridoxine/pyridoxamine 5'-phosphate oxidase from Rhodopseudomonas palustris (strain BisA53).